Reading from the N-terminus, the 161-residue chain is Cyclic pyranopterin monophosphate synthase (161 aa).

Substrate contacts are provided by residues 75-77 and 113-114; these read LCH and ME. Aspartate 128 is a catalytic residue.

Belongs to the MoaC family. In terms of assembly, homohexamer; trimer of dimers.

It carries out the reaction (8S)-3',8-cyclo-7,8-dihydroguanosine 5'-triphosphate = cyclic pyranopterin phosphate + diphosphate. It functions in the pathway cofactor biosynthesis; molybdopterin biosynthesis. Functionally, catalyzes the conversion of (8S)-3',8-cyclo-7,8-dihydroguanosine 5'-triphosphate to cyclic pyranopterin monophosphate (cPMP). The sequence is that of Cyclic pyranopterin monophosphate synthase from Escherichia coli O139:H28 (strain E24377A / ETEC).